The primary structure comprises 142 residues: Deoxyuridine 5'-triphosphate nucleotidohydrolase (142 aa).

Residues 62–64 (RSG), N75, and 79–81 (TID) contribute to the substrate site.

Belongs to the dUTPase family. It depends on Mg(2+) as a cofactor.

It carries out the reaction dUTP + H2O = dUMP + diphosphate + H(+). It functions in the pathway pyrimidine metabolism; dUMP biosynthesis; dUMP from dCTP (dUTP route): step 2/2. In terms of biological role, this enzyme is involved in nucleotide metabolism: it produces dUMP, the immediate precursor of thymidine nucleotides and it decreases the intracellular concentration of dUTP so that uracil cannot be incorporated into DNA. The protein is Deoxyuridine 5'-triphosphate nucleotidohydrolase of Trichodesmium erythraeum (strain IMS101).